The chain runs to 347 residues: Dihydroorotate dehydrogenase (quinone) (347 aa).

Residues 61–65 (AGLDK) and threonine 85 contribute to the FMN site. Lysine 65 lines the substrate pocket. 110–114 (NRMGF) lines the substrate pocket. FMN is bound by residues asparagine 138 and asparagine 171. Asparagine 171 contributes to the substrate binding site. Serine 174 serves as the catalytic Nucleophile. Asparagine 176 provides a ligand contact to substrate. FMN-binding residues include lysine 216 and threonine 244. 245–246 (NT) serves as a coordination point for substrate. Residues glycine 267, glycine 296, and 317–318 (YT) each bind FMN.

This sequence belongs to the dihydroorotate dehydrogenase family. Type 2 subfamily. Monomer. Requires FMN as cofactor.

The protein localises to the cell membrane. It catalyses the reaction (S)-dihydroorotate + a quinone = orotate + a quinol. It functions in the pathway pyrimidine metabolism; UMP biosynthesis via de novo pathway; orotate from (S)-dihydroorotate (quinone route): step 1/1. Its function is as follows. Catalyzes the conversion of dihydroorotate to orotate with quinone as electron acceptor. In Azotobacter vinelandii (strain DJ / ATCC BAA-1303), this protein is Dihydroorotate dehydrogenase (quinone).